The primary structure comprises 124 residues: Replication restart protein PriB (124 aa).

The SSB domain maps to 12–112 (IDNCLILSGS…VHAEHIEFID (101 aa)).

Belongs to the PriB family. In terms of assembly, homodimer. Interacts with PriA and DnaT. Component of the replication restart primosome. Primosome assembly occurs via a 'hand-off' mechanism. PriA binds to replication forks, subsequently PriB then DnaT bind; DnaT then displaces ssDNA to generate the helicase loading substrate.

Functionally, involved in the restart of stalled replication forks, which reloads the replicative helicase on sites other than the origin of replication; the PriA-PriB pathway is the major replication restart pathway. During primosome assembly it facilitates complex formation between PriA and DnaT on DNA; stabilizes PriA on DNA. Stimulates the DNA unwinding activity of PriA helicase. This chain is Replication restart protein PriB, found in Actinobacillus pleuropneumoniae serotype 5b (strain L20).